The chain runs to 273 residues: Protein FAM210A (273 aa).

The tract at residues 95-116 (VLSSSSTSQETPSEKKEEPDPL) is disordered. A compositionally biased stretch (basic and acidic residues) spans 106–116 (PSEKKEEPDPL). The region spanning 118–230 (DKSISLYQRF…GYMSTPPPVK (113 aa)) is the DUF1279 domain. Residues 138–158 (LIPVHLITSGIWFGTFYYASI) form a helical membrane-spanning segment. The stretch at 233-272 (LQGRMEETKELISEKMEETKDRLTEKLQETKEKVSFKKKV) forms a coiled coil. Residues 247–273 (KMEETKDRLTEKLQETKEKVSFKKKVE) are disordered.

The protein belongs to the FAM210 family. Interacts with ATAD3A.

It localises to the membrane. The protein resides in the mitochondrion. It is found in the cytoplasm. May play a role in the structure and strength of both muscle and bone. This Rattus norvegicus (Rat) protein is Protein FAM210A (Fam210a).